Consider the following 171-residue polypeptide: Large ribosomal subunit protein uL22 (171 aa).

This sequence belongs to the universal ribosomal protein uL22 family.

The polypeptide is Large ribosomal subunit protein uL22 (RPL17) (Zea mays (Maize)).